The sequence spans 125 residues: uncharacterized protein (125 aa).

Residues 21–43 (KFSLIALVSFTALAIIVLYHNIS) form a helical membrane-spanning segment.

The protein resides in the membrane. This is an uncharacterized protein from Archaeoglobus fulgidus (strain ATCC 49558 / DSM 4304 / JCM 9628 / NBRC 100126 / VC-16).